Reading from the N-terminus, the 242-residue chain is Biosynthetic peptidoglycan transglycosylase (242 aa).

The helical transmembrane segment at 19 to 39 (LMVVLAIFWGGGIALFSVAPV) threads the bilayer.

The protein belongs to the glycosyltransferase 51 family.

The protein resides in the cell inner membrane. The enzyme catalyses [GlcNAc-(1-&gt;4)-Mur2Ac(oyl-L-Ala-gamma-D-Glu-L-Lys-D-Ala-D-Ala)](n)-di-trans,octa-cis-undecaprenyl diphosphate + beta-D-GlcNAc-(1-&gt;4)-Mur2Ac(oyl-L-Ala-gamma-D-Glu-L-Lys-D-Ala-D-Ala)-di-trans,octa-cis-undecaprenyl diphosphate = [GlcNAc-(1-&gt;4)-Mur2Ac(oyl-L-Ala-gamma-D-Glu-L-Lys-D-Ala-D-Ala)](n+1)-di-trans,octa-cis-undecaprenyl diphosphate + di-trans,octa-cis-undecaprenyl diphosphate + H(+). It functions in the pathway cell wall biogenesis; peptidoglycan biosynthesis. Peptidoglycan polymerase that catalyzes glycan chain elongation from lipid-linked precursors. This Escherichia coli O81 (strain ED1a) protein is Biosynthetic peptidoglycan transglycosylase.